Consider the following 103-residue polypeptide: Large ribosomal subunit protein eL21 (103 aa).

It belongs to the eukaryotic ribosomal protein eL21 family.

This is Large ribosomal subunit protein eL21 from Sulfolobus acidocaldarius (strain ATCC 33909 / DSM 639 / JCM 8929 / NBRC 15157 / NCIMB 11770).